The sequence spans 203 residues: MIPQLIVGLGNPEPKYDQTRHNIGFAAVDALARAWNISLAENRKFQGQYGEGTAPGGVKIRLLKPLTYMNRSGQAIQAVTSWYKLSGESVLVIYDDLDLPLGKTRLRLSGSAGGHNGMKSAIAHLSTQNFPRLRIGIGKPKNAVNGDNSETVSHVLGKFSATETQLMSLVLQFVVECVELSLKQGVEKAMNRCNSCTVEAPKS.

Tyr16 lines the tRNA pocket. The Proton acceptor role is filled by His21. Tyr68, Asn70, and Asn116 together coordinate tRNA.

The protein belongs to the PTH family. As to quaternary structure, monomer.

Its subcellular location is the cytoplasm. The catalysed reaction is an N-acyl-L-alpha-aminoacyl-tRNA + H2O = an N-acyl-L-amino acid + a tRNA + H(+). In terms of biological role, hydrolyzes ribosome-free peptidyl-tRNAs (with 1 or more amino acids incorporated), which drop off the ribosome during protein synthesis, or as a result of ribosome stalling. Functionally, catalyzes the release of premature peptidyl moieties from peptidyl-tRNA molecules trapped in stalled 50S ribosomal subunits, and thus maintains levels of free tRNAs and 50S ribosomes. The sequence is that of Peptidyl-tRNA hydrolase from Nostoc sp. (strain PCC 7120 / SAG 25.82 / UTEX 2576).